We begin with the raw amino-acid sequence, 155 residues long: 6,7-dimethyl-8-ribityllumazine synthase (155 aa).

5-amino-6-(D-ribitylamino)uracil is bound by residues Phe23, 57 to 59 (AFE), and 81 to 83 (AVI). 86–87 (ST) contributes to the (2S)-2-hydroxy-3-oxobutyl phosphate binding site. His89 acts as the Proton donor in catalysis. Residue Phe114 participates in 5-amino-6-(D-ribitylamino)uracil binding. Arg128 provides a ligand contact to (2S)-2-hydroxy-3-oxobutyl phosphate.

This sequence belongs to the DMRL synthase family.

It catalyses the reaction (2S)-2-hydroxy-3-oxobutyl phosphate + 5-amino-6-(D-ribitylamino)uracil = 6,7-dimethyl-8-(1-D-ribityl)lumazine + phosphate + 2 H2O + H(+). It functions in the pathway cofactor biosynthesis; riboflavin biosynthesis; riboflavin from 2-hydroxy-3-oxobutyl phosphate and 5-amino-6-(D-ribitylamino)uracil: step 1/2. In terms of biological role, catalyzes the formation of 6,7-dimethyl-8-ribityllumazine by condensation of 5-amino-6-(D-ribitylamino)uracil with 3,4-dihydroxy-2-butanone 4-phosphate. This is the penultimate step in the biosynthesis of riboflavin. This chain is 6,7-dimethyl-8-ribityllumazine synthase, found in Geobacter sp. (strain M21).